Consider the following 115-residue polypeptide: Ribonuclease P protein component (115 aa).

This sequence belongs to the RnpA family. As to quaternary structure, consists of a catalytic RNA component (M1 or rnpB) and a protein subunit.

It carries out the reaction Endonucleolytic cleavage of RNA, removing 5'-extranucleotides from tRNA precursor.. Functionally, RNaseP catalyzes the removal of the 5'-leader sequence from pre-tRNA to produce the mature 5'-terminus. It can also cleave other RNA substrates such as 4.5S RNA. The protein component plays an auxiliary but essential role in vivo by binding to the 5'-leader sequence and broadening the substrate specificity of the ribozyme. This Staphylococcus aureus (strain Mu3 / ATCC 700698) protein is Ribonuclease P protein component.